Reading from the N-terminus, the 327-residue chain is MSHLAELVANAAAAINQASDVAALDNVRVEYLGKKGHLTLQMTTLRDLPPEERPAAGAVINAAKEQVQQALNARKAELESAALDARLAAETIDISLPGRRIENGGLHPVTRTIDRIESFFGELGFTVATGPEIEDDYHNFDALNIPGHHPARADHDTFWFDATRLLRTQTSGVQIRTMKAQQPPIRIIAPGRVYRNDYDQTHTPMFHQMEGLIVDTNISFTNLKGTLHDFLRNFFEEDLQIRFRPSYFPFTEPSAEVDVMGKNGKWLEVLGCGMVHPNVLRNVGIDPEIYSGFAFGMGMERLTMLRYGVTDLRSFFENDLRFLKQFK.

Glutamate 252 serves as a coordination point for Mg(2+).

It belongs to the class-II aminoacyl-tRNA synthetase family. Phe-tRNA synthetase alpha subunit type 1 subfamily. Tetramer of two alpha and two beta subunits. Mg(2+) serves as cofactor.

The protein resides in the cytoplasm. It carries out the reaction tRNA(Phe) + L-phenylalanine + ATP = L-phenylalanyl-tRNA(Phe) + AMP + diphosphate + H(+). This chain is Phenylalanine--tRNA ligase alpha subunit, found in Salmonella newport (strain SL254).